The following is a 284-amino-acid chain: L-ribulose-5-phosphate 3-epimerase UlaE (284 aa).

It belongs to the L-ribulose-5-phosphate 3-epimerase family.

It catalyses the reaction L-ribulose 5-phosphate = L-xylulose 5-phosphate. It participates in cofactor degradation; L-ascorbate degradation; D-xylulose 5-phosphate from L-ascorbate: step 3/4. In terms of biological role, catalyzes the isomerization of L-xylulose-5-phosphate to L-ribulose-5-phosphate. Is involved in the anaerobic L-ascorbate utilization. The chain is L-ribulose-5-phosphate 3-epimerase UlaE from Escherichia coli O139:H28 (strain E24377A / ETEC).